Here is an 831-residue protein sequence, read N- to C-terminus: Periplasmic nitrate reductase (831 aa).

The tat-type signal signal peptide spans 1-29 (MTVTRRDFVRHQALATAAAAAGVAVPAAA). Positions 41 to 97 (LVWSKAPCRFCGTGCSVNVATKEGRVVATHGDIKSPVNRGLNCVKGYFLSKVMYGED) constitute a 4Fe-4S Mo/W bis-MGD-type domain. [4Fe-4S] cluster-binding residues include C48, C51, C55, and C83. Residues K85, Q152, N177, C181, 214–221 (WGSNMAEM), 245–249 (STYEH), 264–266 (QSD), M375, Q379, N485, 511–512 (SD), K534, D561, and 721–730 (TGRVIEHWHS) contribute to the Mo-bis(molybdopterin guanine dinucleotide) site. W797 provides a ligand contact to substrate. N805 and K822 together coordinate Mo-bis(molybdopterin guanine dinucleotide).

This sequence belongs to the prokaryotic molybdopterin-containing oxidoreductase family. NasA/NapA/NarB subfamily. Component of the periplasmic nitrate reductase NapAB complex composed of NapA and NapB. The cofactor is [4Fe-4S] cluster. Mo-bis(molybdopterin guanine dinucleotide) is required as a cofactor. Post-translationally, predicted to be exported by the Tat system. The position of the signal peptide cleavage has not been experimentally proven.

Its subcellular location is the periplasm. The enzyme catalyses 2 Fe(II)-[cytochrome] + nitrate + 2 H(+) = 2 Fe(III)-[cytochrome] + nitrite + H2O. Its function is as follows. Catalytic subunit of the periplasmic nitrate reductase complex NapAB. Receives electrons from NapB and catalyzes the reduction of nitrate to nitrite. The chain is Periplasmic nitrate reductase from Saccharophagus degradans (strain 2-40 / ATCC 43961 / DSM 17024).